A 429-amino-acid chain; its full sequence is MKFFIKTYGCQMNENDSEVARYYLEQEGYESAENENEADIVILNTCVVRKKAEDKFLSTIGELRKKNKKIGVMGCGAEKLKEDLFKRGVNFVIGTRAISRIPEAVELSIKGKKAAIFDDKLDEIDYRNILKRNSKHHAWITIIYGCNRFCTYCIVPYTRGREKSRKMDDILREVKNLSLNGVREITYLGQNVDAYGKDLNDGTSLAKLLNETKKIENIERIWFLTSYPTDFSLDIAREIASSEKIAKSIHLPVQHGSNKILKKMNRRYTIEEYYELIKSIREIVPDASISSDIIVGFPDETEDDFQQTVKLVEEIKFERLNLAIYSPREGTIAWKYFEDNVPRAIKTRRMAYLLNLQKEINKMLNESYLDKTVEVIVEERAKSGLFYGRDIRNKIIAFEGDESLIGKKILVKIKKTTAGPLYGDIIKII.

Residues 1–110 (MKFFIKTYGC…IPEAVELSIK (110 aa)) form the MTTase N-terminal domain. Positions 10, 46, 75, 146, 150, and 153 each coordinate [4Fe-4S] cluster. One can recognise a Radical SAM core domain in the interval 132 to 364 (RNSKHHAWIT…NLQKEINKML (233 aa)). One can recognise a TRAM domain in the interval 366-427 (ESYLDKTVEV…AGPLYGDIIK (62 aa)).

Belongs to the methylthiotransferase family. MiaB subfamily. In terms of assembly, monomer. Requires [4Fe-4S] cluster as cofactor.

The protein localises to the cytoplasm. It catalyses the reaction N(6)-dimethylallyladenosine(37) in tRNA + (sulfur carrier)-SH + AH2 + 2 S-adenosyl-L-methionine = 2-methylsulfanyl-N(6)-dimethylallyladenosine(37) in tRNA + (sulfur carrier)-H + 5'-deoxyadenosine + L-methionine + A + S-adenosyl-L-homocysteine + 2 H(+). Its function is as follows. Catalyzes the methylthiolation of N6-(dimethylallyl)adenosine (i(6)A), leading to the formation of 2-methylthio-N6-(dimethylallyl)adenosine (ms(2)i(6)A) at position 37 in tRNAs that read codons beginning with uridine. This chain is tRNA-2-methylthio-N(6)-dimethylallyladenosine synthase, found in Thermosipho africanus (strain TCF52B).